Consider the following 249-residue polypeptide: Large ribosomal subunit protein uL22m (249 aa).

A mitochondrion-targeting transit peptide spans Met1 to Gly22. Residues Ala70–Gln98 are disordered. Basic and acidic residues predominate over residues Gln72 to Gln98.

Belongs to the universal ribosomal protein uL22 family. Component of the mitochondrial large ribosomal subunit (mt-LSU). Mature yeast 74S mitochondrial ribosomes consist of a small (37S) and a large (54S) subunit. The 37S small subunit contains a 15S ribosomal RNA (15S mt-rRNA) and at least 32 different proteins. The 54S large subunit contains a 21S rRNA (21S mt-rRNA) and at least 45 different proteins. uL22m forms the wall of the exit tunnel.

The protein resides in the mitochondrion. Its function is as follows. Component of the mitochondrial ribosome (mitoribosome), a dedicated translation machinery responsible for the synthesis of mitochondrial genome-encoded proteins, including at least some of the essential transmembrane subunits of the mitochondrial respiratory chain. The mitoribosomes are attached to the mitochondrial inner membrane and translation products are cotranslationally integrated into the membrane. The chain is Large ribosomal subunit protein uL22m (mrpl22) from Schizosaccharomyces pombe (strain 972 / ATCC 24843) (Fission yeast).